Reading from the N-terminus, the 115-residue chain is MSRVKRGNVARKRRNKILRLAKGFQGSNGSLFRTANQRVMKALCNAYRDRKRRKRDFRRLWIARINAAARMNGMSYSKLIGNLKKADIRINRKMLAQIAILDPTNFQKVVADVKK.

Belongs to the bacterial ribosomal protein bL20 family.

Its function is as follows. Binds directly to 23S ribosomal RNA and is necessary for the in vitro assembly process of the 50S ribosomal subunit. It is not involved in the protein synthesizing functions of that subunit. The sequence is that of Large ribosomal subunit protein bL20 from Prochlorococcus marinus (strain SARG / CCMP1375 / SS120).